Here is a 339-residue protein sequence, read N- to C-terminus: Carboxyvinyl-carboxyphosphonate phosphorylmutase, chloroplastic (339 aa).

The transit peptide at 1 to 30 directs the protein to the chloroplast; that stretch reads MSMLMAVKTTSLCCSSLNLTASPTFRRNPR.

The protein belongs to the isocitrate lyase/PEP mutase superfamily.

It localises to the plastid. The protein localises to the chloroplast. The enzyme catalyses 1-carboxyvinyl carboxyphosphonate + H(+) = 3-(hydrohydroxyphosphoryl)pyruvate + CO2. This is Carboxyvinyl-carboxyphosphonate phosphorylmutase, chloroplastic from Arabidopsis thaliana (Mouse-ear cress).